The chain runs to 519 residues: T-complex protein 1 subunit gamma (519 aa).

It belongs to the TCP-1 chaperonin family. As to quaternary structure, component of the T-complex protein 1 (TCP1) complex.

It is found in the cytoplasm. Molecular chaperone; assists the folding of proteins upon ATP hydrolysis. This Encephalitozoon cuniculi (strain GB-M1) (Microsporidian parasite) protein is T-complex protein 1 subunit gamma (CCT3).